The sequence spans 233 residues: Small ribosomal subunit protein uS7m (233 aa).

A mitochondrion-targeting transit peptide spans 1 to 28 (MAAPTGKLLVHRIRAGLTCLTQVRWSRY).

The protein belongs to the universal ribosomal protein uS7 family. In terms of assembly, component of the mitochondrial ribosome small subunit (28S) which comprises a 12S rRNA and about 30 distinct proteins.

It is found in the mitochondrion. This Xenopus laevis (African clawed frog) protein is Small ribosomal subunit protein uS7m (mrps7).